We begin with the raw amino-acid sequence, 148 residues long: Hemoglobin subunit beta (148 aa).

The region spanning 3–148 (XWTDXERAAI…VVSALGRQYH (146 aa)) is the Globin domain. Positions 64 and 93 each coordinate heme b.

This sequence belongs to the globin family. Heterotetramer of two alpha chains and two beta chains. Red blood cells.

Functionally, involved in oxygen transport from gills to the various peripheral tissues. The polypeptide is Hemoglobin subunit beta (hbb) (Decapterus maruadsi (Japanese scad)).